A 158-amino-acid polypeptide reads, in one-letter code: MMSKLTHIDQTGAANMVDVGAKDETERQAVAEGSVRMNLETLALILEGNAAKGDVIGAARLAGIMAAKKTADLIPLCHPLMLTKVAVEIEPDQTLPGLRVRALAKLKGRTGVEMEALTAVSVTCLTIYDMAKAVDKHMEIGGIRVTEKGGGKSGDWKA.

Substrate contacts are provided by residues 76–78 (LCH) and 114–115 (ME). Asp-129 is a catalytic residue.

The protein belongs to the MoaC family. As to quaternary structure, homohexamer; trimer of dimers.

The catalysed reaction is (8S)-3',8-cyclo-7,8-dihydroguanosine 5'-triphosphate = cyclic pyranopterin phosphate + diphosphate. It functions in the pathway cofactor biosynthesis; molybdopterin biosynthesis. Functionally, catalyzes the conversion of (8S)-3',8-cyclo-7,8-dihydroguanosine 5'-triphosphate to cyclic pyranopterin monophosphate (cPMP). This is Cyclic pyranopterin monophosphate synthase from Brucella anthropi (strain ATCC 49188 / DSM 6882 / CCUG 24695 / JCM 21032 / LMG 3331 / NBRC 15819 / NCTC 12168 / Alc 37) (Ochrobactrum anthropi).